The chain runs to 621 residues: tRNA uridine 5-carboxymethylaminomethyl modification enzyme MnmG (621 aa).

11 to 16 (GAGHAG) is a binding site for FAD. 271–285 (GPRYCPSVEDKINRF) contacts NAD(+).

It belongs to the MnmG family. Homodimer. Heterotetramer of two MnmE and two MnmG subunits. The cofactor is FAD.

Its subcellular location is the cytoplasm. In terms of biological role, NAD-binding protein involved in the addition of a carboxymethylaminomethyl (cmnm) group at the wobble position (U34) of certain tRNAs, forming tRNA-cmnm(5)s(2)U34. The chain is tRNA uridine 5-carboxymethylaminomethyl modification enzyme MnmG from Cytophaga hutchinsonii (strain ATCC 33406 / DSM 1761 / CIP 103989 / NBRC 15051 / NCIMB 9469 / D465).